A 101-amino-acid polypeptide reads, in one-letter code: NAD(P)H-quinone oxidoreductase subunit 4L, chloroplastic (101 aa).

The next 3 membrane-spanning stretches (helical) occupy residues 2–22 (ILEH…YGLI), 32–52 (MCLE…SDFF), and 61–81 (IFSI…LAIV).

It belongs to the complex I subunit 4L family. As to quaternary structure, NDH is composed of at least 16 different subunits, 5 of which are encoded in the nucleus.

It localises to the plastid. It is found in the chloroplast thylakoid membrane. It catalyses the reaction a plastoquinone + NADH + (n+1) H(+)(in) = a plastoquinol + NAD(+) + n H(+)(out). The enzyme catalyses a plastoquinone + NADPH + (n+1) H(+)(in) = a plastoquinol + NADP(+) + n H(+)(out). Functionally, NDH shuttles electrons from NAD(P)H:plastoquinone, via FMN and iron-sulfur (Fe-S) centers, to quinones in the photosynthetic chain and possibly in a chloroplast respiratory chain. The immediate electron acceptor for the enzyme in this species is believed to be plastoquinone. Couples the redox reaction to proton translocation, and thus conserves the redox energy in a proton gradient. This chain is NAD(P)H-quinone oxidoreductase subunit 4L, chloroplastic, found in Eucalyptus globulus subsp. globulus (Tasmanian blue gum).